Consider the following 197-residue polypeptide: ATP-dependent Clp protease proteolytic subunit 1 (197 aa).

S100 serves as the catalytic Nucleophile. H125 is a catalytic residue.

This sequence belongs to the peptidase S14 family. In terms of assembly, fourteen ClpP subunits assemble into 2 heptameric rings which stack back to back to give a disk-like structure with a central cavity, resembling the structure of eukaryotic proteasomes.

It is found in the cytoplasm. The catalysed reaction is Hydrolysis of proteins to small peptides in the presence of ATP and magnesium. alpha-casein is the usual test substrate. In the absence of ATP, only oligopeptides shorter than five residues are hydrolyzed (such as succinyl-Leu-Tyr-|-NHMec, and Leu-Tyr-Leu-|-Tyr-Trp, in which cleavage of the -Tyr-|-Leu- and -Tyr-|-Trp bonds also occurs).. In terms of biological role, cleaves peptides in various proteins in a process that requires ATP hydrolysis. Has a chymotrypsin-like activity. Plays a major role in the degradation of misfolded proteins. In Gloeobacter violaceus (strain ATCC 29082 / PCC 7421), this protein is ATP-dependent Clp protease proteolytic subunit 1.